Here is a 953-residue protein sequence, read N- to C-terminus: Isoleucine--tRNA ligase (953 aa).

The 'HIGH' region motif lies at 58–68; that stretch reads PYANGNIHLGH. Glutamate 565 provides a ligand contact to L-isoleucyl-5'-AMP. Positions 606-610 match the 'KMSKS' region motif; the sequence is KMSKS. Lysine 609 is a binding site for ATP. Positions 916, 919, 936, and 939 each coordinate Zn(2+).

The protein belongs to the class-I aminoacyl-tRNA synthetase family. IleS type 1 subfamily. In terms of assembly, monomer. The cofactor is Zn(2+).

It is found in the cytoplasm. The catalysed reaction is tRNA(Ile) + L-isoleucine + ATP = L-isoleucyl-tRNA(Ile) + AMP + diphosphate. Functionally, catalyzes the attachment of isoleucine to tRNA(Ile). As IleRS can inadvertently accommodate and process structurally similar amino acids such as valine, to avoid such errors it has two additional distinct tRNA(Ile)-dependent editing activities. One activity is designated as 'pretransfer' editing and involves the hydrolysis of activated Val-AMP. The other activity is designated 'posttransfer' editing and involves deacylation of mischarged Val-tRNA(Ile). The chain is Isoleucine--tRNA ligase from Colwellia psychrerythraea (strain 34H / ATCC BAA-681) (Vibrio psychroerythus).